The sequence spans 507 residues: Maturase K (507 aa).

It belongs to the intron maturase 2 family. MatK subfamily.

The protein resides in the plastid. It is found in the chloroplast. Usually encoded in the trnK tRNA gene intron. Probably assists in splicing its own and other chloroplast group II introns. The sequence is that of Maturase K from Magnolia champaca (Yellow jade orchid tree).